The sequence spans 651 residues: L-aspartate oxidase, chloroplastic (651 aa).

The N-terminal 74 residues, 1 to 74, are a transit peptide targeting the chloroplast; sequence MAAHVSTGNI…PISETSKPIR (74 aa). FAD is bound by residues 92–95, Lys114, 121–128, and Asp292; these read SGVA and NTNYAQGG. Arg368 serves as the catalytic Proton donor/acceptor. FAD-binding positions include Glu453 and 469 to 470; that span reads SL.

Belongs to the FAD-dependent oxidoreductase 2 family. NadB subfamily. Interacts in vitro with QS. It depends on FAD as a cofactor.

It is found in the plastid. The protein localises to the chloroplast. The enzyme catalyses L-aspartate + O2 = iminosuccinate + H2O2. It functions in the pathway cofactor biosynthesis; NAD(+) biosynthesis; iminoaspartate from L-aspartate (oxidase route): step 1/1. In terms of biological role, catalyzes the oxidation of L-aspartate to iminoaspartate. Can complement nadB-deficient E.coli mutant. Plays a role in stomatal immunity. The polypeptide is L-aspartate oxidase, chloroplastic (Arabidopsis thaliana (Mouse-ear cress)).